Here is a 362-residue protein sequence, read N- to C-terminus: 3-isopropylmalate dehydrogenase (362 aa).

Residue 78-91 (GPKWESLPPDEQPE) coordinates NAD(+). Arg-99, Arg-109, Arg-138, and Asp-227 together coordinate substrate. Mg(2+) is bound by residues Asp-227, Asp-251, and Asp-255. 285 to 297 (GSAPDIAGQGIAN) contacts NAD(+).

Belongs to the isocitrate and isopropylmalate dehydrogenases family. LeuB type 1 subfamily. Homodimer. It depends on Mg(2+) as a cofactor. Mn(2+) serves as cofactor.

It is found in the cytoplasm. It carries out the reaction (2R,3S)-3-isopropylmalate + NAD(+) = 4-methyl-2-oxopentanoate + CO2 + NADH. The protein operates within amino-acid biosynthesis; L-leucine biosynthesis; L-leucine from 3-methyl-2-oxobutanoate: step 3/4. Catalyzes the oxidation of 3-carboxy-2-hydroxy-4-methylpentanoate (3-isopropylmalate) to 3-carboxy-4-methyl-2-oxopentanoate. The product decarboxylates to 4-methyl-2 oxopentanoate. This chain is 3-isopropylmalate dehydrogenase, found in Geobacter sulfurreducens (strain ATCC 51573 / DSM 12127 / PCA).